Consider the following 171-residue polypeptide: Putative adenylate kinase (171 aa).

The ATP site is built by G9, G11, K12, T13, and T14. The interval 28–51 (SLGELIRQKGFVLGRDPIRGYLEA) is NMP. The tract at residues 99-109 (GRGYPEGKVLE) is LID. R100 contacts ATP.

This sequence belongs to the adenylate kinase family. AK6 subfamily. In terms of assembly, interacts with uS11. Not a structural component of 40S pre-ribosomes, but transiently interacts with them by binding to uS11.

The enzyme catalyses AMP + ATP = 2 ADP. It carries out the reaction ATP + H2O = ADP + phosphate + H(+). Broad-specificity nucleoside monophosphate (NMP) kinase that catalyzes the reversible transfer of the terminal phosphate group between nucleoside triphosphates and monophosphates. Also has ATPase activity. Involved in the late maturation steps of the 30S ribosomal particles, specifically 16S rRNA maturation. While NMP activity is not required for ribosome maturation, ATPase activity is. Associates transiently with small ribosomal subunit protein uS11. ATP hydrolysis breaks the interaction with uS11. May temporarily remove uS11 from the ribosome to enable a conformational change of the ribosomal RNA that is needed for the final maturation step of the small ribosomal subunit. In Methanothermobacter thermautotrophicus (strain ATCC 29096 / DSM 1053 / JCM 10044 / NBRC 100330 / Delta H) (Methanobacterium thermoautotrophicum), this protein is Putative adenylate kinase.